Reading from the N-terminus, the 298-residue chain is N-acetylmuramic acid 6-phosphate etherase (298 aa).

One can recognise an SIS domain in the interval 55–218 (IHAQVSGGGR…STGLMIKSGK (164 aa)). Glu83 (proton donor) is an active-site residue. The active site involves Glu114.

The protein belongs to the GCKR-like family. MurNAc-6-P etherase subfamily. In terms of assembly, homodimer.

It carries out the reaction N-acetyl-D-muramate 6-phosphate + H2O = N-acetyl-D-glucosamine 6-phosphate + (R)-lactate. It functions in the pathway amino-sugar metabolism; N-acetylmuramate degradation. The protein operates within amino-sugar metabolism; 1,6-anhydro-N-acetylmuramate degradation. Its pathway is cell wall biogenesis; peptidoglycan recycling. Specifically catalyzes the cleavage of the D-lactyl ether substituent of MurNAc 6-phosphate, producing GlcNAc 6-phosphate and D-lactate. Together with AnmK, is also required for the utilization of anhydro-N-acetylmuramic acid (anhMurNAc) either imported from the medium or derived from its own cell wall murein, and thus plays a role in cell wall recycling. This is N-acetylmuramic acid 6-phosphate etherase from Escherichia coli (strain K12 / MC4100 / BW2952).